The chain runs to 288 residues: Glucose-1-phosphate thymidylyltransferase (288 aa).

Mg(2+) is bound by residues D108 and D223.

Belongs to the glucose-1-phosphate thymidylyltransferase family. In terms of assembly, homotetramer. Requires Mg(2+) as cofactor.

It carries out the reaction dTTP + alpha-D-glucose 1-phosphate + H(+) = dTDP-alpha-D-glucose + diphosphate. Its function is as follows. Catalyzes the formation of dTDP-glucose, from dTTP and glucose 1-phosphate, as well as its pyrophosphorolysis. This is Glucose-1-phosphate thymidylyltransferase (rmlA1) from Neisseria meningitidis serogroup A / serotype 4A (strain DSM 15465 / Z2491).